A 502-amino-acid chain; its full sequence is Glutamate decarboxylase 1 (502 aa).

Ser-8 is subject to Phosphoserine. An N6-(pyridoxal phosphate)lysine modification is found at Lys-277. The interval 469 to 502 (LMVTVKKSDIDKQRDIITGWKKFVADRKKTSGIC) is calmodulin-binding.

Belongs to the group II decarboxylase family. Homohexamer. Interacts with calmodulin with a 1:3 stoichiometry. Requires pyridoxal 5'-phosphate as cofactor. In terms of tissue distribution, expressed in roots. Detected at low levels in shoots of young seedlings. Not detected in the root tips or in the central vascular bundle in the elongating region of mature roots.

It carries out the reaction L-glutamate + H(+) = 4-aminobutanoate + CO2. Its activity is regulated as follows. Up-regulated by calmodulin binding at physiological pH. Catalyzes the conversion of glutamate to 4-aminobutanoate (GABA). The calmodulin-binding is calcium-dependent and it is proposed to directly or indirectly form a calcium regulated control of GABA biosynthesis. This chain is Glutamate decarboxylase 1 (GAD1), found in Arabidopsis thaliana (Mouse-ear cress).